Here is a 1106-residue protein sequence, read N- to C-terminus: Probable NAD-specific glutamate dehydrogenase (1106 aa).

Lys654 is a catalytic residue.

Belongs to the Glu/Leu/Phe/Val dehydrogenases family. Homotetramer.

It is found in the cytoplasm. The catalysed reaction is L-glutamate + NAD(+) + H2O = 2-oxoglutarate + NH4(+) + NADH + H(+). NAD(+)-dependent glutamate dehydrogenase which degrades glutamate to ammonia and alpha-ketoglutarate. In Schizosaccharomyces pombe (strain 972 / ATCC 24843) (Fission yeast), this protein is Probable NAD-specific glutamate dehydrogenase (gdh2).